The following is an 841-amino-acid chain: Homeobox-leucine zipper protein ATHB-9 (841 aa).

Positions 1–18 are enriched in basic and acidic residues; the sequence is MMAHHSMDDRDSPDKGFD. A disordered region spans residues 1–21; it reads MMAHHSMDDRDSPDKGFDSGK. A DNA-binding region (homeobox) is located at residues 18–81; sequence DSGKYVRYTP…NRRCREKQRK (64 aa). The stretch at 85–118 forms a coiled coil; it reads RLQTVNRKLSAMNKLLMEENDRLQKQVSNLVYEN. Disordered stretches follow at residues 140–162 and 602–630; these read VVVSGQQRQQQNPTHQHPQRDVN and DQKTNPNDHQSASRTRDLASSLDGSTKTD. A compositionally biased stretch (low complexity) spans 145-155; sequence QQRQQQNPTHQ. The region spanning 160–388 is the START domain; that stretch reads DVNNPANLLS…IAQETSGEVQ (229 aa). A compositionally biased stretch (polar residues) spans 603–614; it reads QKTNPNDHQSAS.

Belongs to the HD-ZIP homeobox family. Class III subfamily. Binds DNA as homodimer. Interacts with ESR1 and ESR2. Interacts with ZPR3.

Its subcellular location is the nucleus. Its function is as follows. Probable transcription factor involved in the determination of adaxial-abaxial polarity in ovule primordium. Specifies adaxial leaf fates. Binds to the DNA sequence 5'-GTAAT[GC]ATTAC-3'. In Arabidopsis thaliana (Mouse-ear cress), this protein is Homeobox-leucine zipper protein ATHB-9 (ATHB-9).